The primary structure comprises 907 residues: Protein translocase subunit SecA (907 aa).

Residues Gln-87, 105-109 (GEGKT), and Asp-510 contribute to the ATP site. Zn(2+) is bound by residues Cys-892, Cys-894, Cys-903, and His-904.

This sequence belongs to the SecA family. As to quaternary structure, monomer and homodimer. Part of the essential Sec protein translocation apparatus which comprises SecA, SecYEG and auxiliary proteins SecDF-YajC and YidC. Zn(2+) serves as cofactor.

It is found in the cell inner membrane. The protein localises to the cytoplasm. It catalyses the reaction ATP + H2O + cellular proteinSide 1 = ADP + phosphate + cellular proteinSide 2.. Its function is as follows. Part of the Sec protein translocase complex. Interacts with the SecYEG preprotein conducting channel. Has a central role in coupling the hydrolysis of ATP to the transfer of proteins into and across the cell membrane, serving both as a receptor for the preprotein-SecB complex and as an ATP-driven molecular motor driving the stepwise translocation of polypeptide chains across the membrane. This is Protein translocase subunit SecA from Acinetobacter baumannii (strain ACICU).